Consider the following 247-residue polypeptide: uncharacterized protein (247 aa).

The NADP(+) site is built by L11, N85, and K119. The active-site Proton donor is the S136. Positions 150, 154, 181, and 183 each coordinate NADP(+). The active-site Proton acceptor is Y150. Catalysis depends on K154, which acts as the Lowers pKa of active site Tyr.

This sequence belongs to the short-chain dehydrogenases/reductases (SDR) family.

This is an uncharacterized protein from Schizosaccharomyces pombe (strain 972 / ATCC 24843) (Fission yeast).